A 458-amino-acid polypeptide reads, in one-letter code: Argininosuccinate lyase (458 aa).

It belongs to the lyase 1 family. Argininosuccinate lyase subfamily.

Its subcellular location is the cytoplasm. The catalysed reaction is 2-(N(omega)-L-arginino)succinate = fumarate + L-arginine. It functions in the pathway amino-acid biosynthesis; L-arginine biosynthesis; L-arginine from L-ornithine and carbamoyl phosphate: step 3/3. The sequence is that of Argininosuccinate lyase from Heliobacterium mobile (Heliobacillus mobilis).